We begin with the raw amino-acid sequence, 889 residues long: Alanine--tRNA ligase (889 aa).

The Zn(2+) site is built by H564, H568, C671, and H675.

This sequence belongs to the class-II aminoacyl-tRNA synthetase family. Zn(2+) is required as a cofactor.

The protein resides in the cytoplasm. It catalyses the reaction tRNA(Ala) + L-alanine + ATP = L-alanyl-tRNA(Ala) + AMP + diphosphate. Its function is as follows. Catalyzes the attachment of alanine to tRNA(Ala) in a two-step reaction: alanine is first activated by ATP to form Ala-AMP and then transferred to the acceptor end of tRNA(Ala). Also edits incorrectly charged Ser-tRNA(Ala) and Gly-tRNA(Ala) via its editing domain. The polypeptide is Alanine--tRNA ligase (Pelagibacter ubique (strain HTCC1062)).